Here is a 297-residue protein sequence, read N- to C-terminus: N-acetylmuramic acid 6-phosphate etherase (297 aa).

The 164-residue stretch at 55–218 folds into the SIS domain; that stretch reads AAAALKSGGR…STGAMVKFGK (164 aa). E83 functions as the Proton donor in the catalytic mechanism. The active site involves E114.

It belongs to the GCKR-like family. MurNAc-6-P etherase subfamily. Homodimer.

The enzyme catalyses N-acetyl-D-muramate 6-phosphate + H2O = N-acetyl-D-glucosamine 6-phosphate + (R)-lactate. It participates in amino-sugar metabolism; 1,6-anhydro-N-acetylmuramate degradation. It functions in the pathway amino-sugar metabolism; N-acetylmuramate degradation. The protein operates within cell wall biogenesis; peptidoglycan recycling. In terms of biological role, specifically catalyzes the cleavage of the D-lactyl ether substituent of MurNAc 6-phosphate, producing GlcNAc 6-phosphate and D-lactate. Together with AnmK, is also required for the utilization of anhydro-N-acetylmuramic acid (anhMurNAc) either imported from the medium or derived from its own cell wall murein, and thus plays a role in cell wall recycling. The polypeptide is N-acetylmuramic acid 6-phosphate etherase (Salmonella paratyphi A (strain ATCC 9150 / SARB42)).